A 319-amino-acid chain; its full sequence is Probable murein peptide carboxypeptidase (319 aa).

The Nucleophile role is filled by Ser116. Active-site charge relay system residues include Glu214 and His284.

This sequence belongs to the peptidase S66 family.

It localises to the cytoplasm. It participates in cell wall degradation; peptidoglycan degradation. May be involved in the degradation of peptidoglycan by catalyzing the cleavage of the terminal D-alanine residue from cytoplasmic murein peptides. The polypeptide is Probable murein peptide carboxypeptidase (ykfA) (Bacillus subtilis (strain 168)).